A 187-amino-acid chain; its full sequence is Large ribosomal subunit protein uL6 (187 aa).

Residues Glu151–Lys170 form a disordered region.

This sequence belongs to the universal ribosomal protein uL6 family. In terms of assembly, part of the 50S ribosomal subunit.

Its function is as follows. This protein binds to the 23S rRNA, and is important in its secondary structure. It is located near the subunit interface in the base of the L7/L12 stalk, and near the tRNA binding site of the peptidyltransferase center. The sequence is that of Large ribosomal subunit protein uL6 from Chloroflexus aurantiacus (strain ATCC 29366 / DSM 635 / J-10-fl).